Consider the following 381-residue polypeptide: uncharacterized protein (381 aa).

9 helical membrane-spanning segments follow: residues 59 to 79 (LITL…LYYM), 84 to 104 (GVAP…YQTM), 147 to 167 (VGVN…FFMA), 190 to 210 (SMMA…FNTI), 222 to 242 (LVLL…TFSI), 250 to 270 (ILTN…SIYW), 284 to 304 (HYFM…LILA), 311 to 331 (LSPI…IYKF), and 344 to 364 (VYFF…VTSL).

Belongs to the CDP-alcohol phosphatidyltransferase class-I family.

It is found in the membrane. This is an uncharacterized protein from Dictyostelium discoideum (Social amoeba).